The following is a 284-amino-acid chain: Diaminopimelate epimerase (284 aa).

The substrate site is built by Asn-20, Gln-53, and Asn-73. Cys-82 functions as the Proton donor in the catalytic mechanism. Residues 83–84 (GN), Asn-167, Asn-200, and 218–219 (ER) contribute to the substrate site. Cys-227 functions as the Proton acceptor in the catalytic mechanism. 228–229 (GS) contacts substrate.

Belongs to the diaminopimelate epimerase family. Homodimer.

The protein localises to the cytoplasm. The enzyme catalyses (2S,6S)-2,6-diaminopimelate = meso-2,6-diaminopimelate. Its pathway is amino-acid biosynthesis; L-lysine biosynthesis via DAP pathway; DL-2,6-diaminopimelate from LL-2,6-diaminopimelate: step 1/1. Its function is as follows. Catalyzes the stereoinversion of LL-2,6-diaminopimelate (L,L-DAP) to meso-diaminopimelate (meso-DAP), a precursor of L-lysine and an essential component of the bacterial peptidoglycan. In Xanthomonas euvesicatoria pv. vesicatoria (strain 85-10) (Xanthomonas campestris pv. vesicatoria), this protein is Diaminopimelate epimerase.